The primary structure comprises 127 residues: DNA-directed RNA polymerase subunit omega (127 aa).

It belongs to the RNA polymerase subunit omega family. As to quaternary structure, the RNAP catalytic core consists of 2 alpha, 1 beta, 1 beta' and 1 omega subunit. When a sigma factor is associated with the core the holoenzyme is formed, which can initiate transcription.

The catalysed reaction is RNA(n) + a ribonucleoside 5'-triphosphate = RNA(n+1) + diphosphate. In terms of biological role, promotes RNA polymerase assembly. Latches the N- and C-terminal regions of the beta' subunit thereby facilitating its interaction with the beta and alpha subunits. In Rickettsia peacockii (strain Rustic), this protein is DNA-directed RNA polymerase subunit omega.